A 105-amino-acid polypeptide reads, in one-letter code: uncharacterized protein (105 aa).

This is an uncharacterized protein from Acidianus bottle-shaped virus (isolate Italy/Pozzuoli) (ABV).